A 62-amino-acid polypeptide reads, in one-letter code: Cytotoxin 6 (62 aa).

An N-terminal signal peptide occupies residues 1–2 (YT). Intrachain disulfides connect cysteine 5–cysteine 23, cysteine 16–cysteine 40, cysteine 44–cysteine 55, and cysteine 56–cysteine 61.

This sequence belongs to the three-finger toxin family. Short-chain subfamily. Type IA cytotoxin sub-subfamily. Monomer in solution; Homodimer and oligomer in the presence of negatively charged lipids forming a pore with a size ranging between 20 and 30 Angstroms. Expressed by the venom gland.

Its subcellular location is the secreted. It is found in the target cell membrane. Functionally, shows cytolytic activity on many different cells by forming pore in lipid membranes. In vivo, increases heart rate or kills the animal by cardiac arrest. In addition, it binds to heparin with high affinity, interacts with Kv channel-interacting protein 1 (KCNIP1) in a calcium-independent manner, and binds to integrin alpha-V/beta-3 (ITGAV/ITGB3) with moderate affinity. This Naja sputatrix (Malayan spitting cobra) protein is Cytotoxin 6.